A 310-amino-acid chain; its full sequence is MNKDNTLHVDTIMKITMFSEVSVGILANSILFFAHLCMLLGENKPKPIHLYIASLSLTQLMLLITMGLIAADMFISQGIWDSTSCQSLIYLHRLSRGFTLSAACLLNVFWMITLSSKKSRLTKFKHNSPHHISGAFLLLCVLYMCFSSHLILSIIATPNLTSDNFMYVTKSCSFLPMCYSRTSMFSTTIAVREAFFIGLMALSSGYLVAFLWRHRKQAQHLHSTGLSSKASPEQRATETILLLMSFFVVLYILENVVFYSRMKFKDGSTFYCVQIIVSHSYATVSSFVFIFTEKRMTKILRSVCTRIINI.

At 1–20 (MNKDNTLHVDTIMKITMFSE) the chain is on the extracellular side. A helical transmembrane segment spans residues 21-41 (VSVGILANSILFFAHLCMLLG). The Cytoplasmic segment spans residues 42 to 59 (ENKPKPIHLYIASLSLTQ). The helical transmembrane segment at 60-80 (LMLLITMGLIAADMFISQGIW) threads the bilayer. Residues 81–93 (DSTSCQSLIYLHR) lie on the Extracellular side of the membrane. An intrachain disulfide couples Cys85 to Cys172. A helical transmembrane segment spans residues 94-114 (LSRGFTLSAACLLNVFWMITL). Residues 115–134 (SSKKSRLTKFKHNSPHHISG) are Cytoplasmic-facing. Residues 135–155 (AFLLLCVLYMCFSSHLILSII) form a helical membrane-spanning segment. The Extracellular segment spans residues 156–193 (ATPNLTSDNFMYVTKSCSFLPMCYSRTSMFSTTIAVRE). Residue Asn159 is glycosylated (N-linked (GlcNAc...) asparagine). A helical membrane pass occupies residues 194-214 (AFFIGLMALSSGYLVAFLWRH). The Cytoplasmic portion of the chain corresponds to 215 to 238 (RKQAQHLHSTGLSSKASPEQRATE). The helical transmembrane segment at 239–259 (TILLLMSFFVVLYILENVVFY) threads the bilayer. Residues 260–269 (SRMKFKDGST) are Extracellular-facing. Residues 270 to 290 (FYCVQIIVSHSYATVSSFVFI) traverse the membrane as a helical segment. At 291-310 (FTEKRMTKILRSVCTRIINI) the chain is on the cytoplasmic side.

Belongs to the G-protein coupled receptor 1 family. In terms of tissue distribution, expressed in 1-4% of neurons of the vomeronasal organ. Only one pheromone receptor gene may be expressed in a particular neuron. Not expressed in the main olfactory epithelium.

The protein resides in the cell membrane. Its function is as follows. Putative pheromone receptor implicated in the regulation of social as well as reproductive behavior. The chain is Vomeronasal type-1 receptor 93 (Vom1r93) from Rattus norvegicus (Rat).